The following is a 1104-amino-acid chain: Inhibitory regulator protein BUD2/CLA2 (1104 aa).

An N-acetylserine modification is found at Ser-2. One can recognise a C2 domain in the interval 316 to 444 (RSEYLSITGS…RYNKETRLPI (129 aa)). The Ras-GAP domain maps to 536-753 (AKIDGTVSRI…NDLLDYIDKM (218 aa)). A Phosphoserine modification is found at Ser-854. Residues 1027–1104 (NPKSSNKTSV…FKKKKETGGS (78 aa)) are disordered. Composition is skewed to polar residues over residues 1029-1043 (KSSN…SSEN) and 1052-1069 (LPNS…SPTK). The span at 1090–1104 (KLTRWFKKKKETGGS) shows a compositional bias: basic residues.

Its function is as follows. Stimulates the GTPase activity of BUD1/RSR1. Participates in the regulation of bud-site selection. The protein is Inhibitory regulator protein BUD2/CLA2 (BUD2) of Saccharomyces cerevisiae (strain ATCC 204508 / S288c) (Baker's yeast).